Reading from the N-terminus, the 337-residue chain is uncharacterized protein (337 aa).

An AFP-like domain is found at 279–337; the sequence is SIVAKRNIKKGEYLSVDNISFKRPGRGIETKYLSIILNRKIKNDKEEDDIIYWDDLLGD.

The protein to B.subtilis SpsE.

This is an uncharacterized protein from Methanocaldococcus jannaschii (strain ATCC 43067 / DSM 2661 / JAL-1 / JCM 10045 / NBRC 100440) (Methanococcus jannaschii).